Reading from the N-terminus, the 876-residue chain is Alanine--tRNA ligase (876 aa).

Zn(2+)-binding residues include His-564, His-568, Cys-666, and His-670.

The protein belongs to the class-II aminoacyl-tRNA synthetase family. In terms of assembly, homotetramer. Requires Zn(2+) as cofactor.

The protein localises to the cytoplasm. The enzyme catalyses tRNA(Ala) + L-alanine + ATP = L-alanyl-tRNA(Ala) + AMP + diphosphate. Functionally, catalyzes the attachment of alanine to tRNA(Ala) in a two-step reaction: alanine is first activated by ATP to form Ala-AMP and then transferred to the acceptor end of tRNA(Ala). Also edits incorrectly charged Ser-tRNA(Ala) and Gly-tRNA(Ala) via its editing domain. This Salmonella typhimurium (strain LT2 / SGSC1412 / ATCC 700720) protein is Alanine--tRNA ligase.